Reading from the N-terminus, the 215-residue chain is Wtf element wtf7 (215 aa).

Positions 1 to 21 (MSGSYAPIEDSADELSVHSGN) are disordered. The next 3 membrane-spanning stretches (helical) occupy residues 119–139 (LAQS…CLFF), 149–169 (LMGW…SFIL), and 189–209 (LILF…YALY).

Belongs to the WTF family.

It localises to the spore membrane. Its function is as follows. May act in meiotic drive. This is Wtf element wtf7 from Schizosaccharomyces pombe (strain 972 / ATCC 24843) (Fission yeast).